The chain runs to 406 residues: Zinc finger protein 57 (406 aa).

One can recognise a KRAB domain in the interval 17–88 (VRYEDVAVSF…TCTGVFKGGP (72 aa)). Residues 57–77 (ESKKKPQEPNPNLKDKDDDKS) form a disordered region. The C2H2-type 1; degenerate zinc-finger motif lies at 90-113 (FFCLTCGKCFKKNTFLFNHQFPVR). 2 C2H2-type zinc fingers span residues 140-162 (FFCN…RRAH) and 168-190 (RSCP…LKVH). Residues 194–226 (KPVAGSHVKVHQNKPVASNQKQKGRVPPTTRES) form a disordered region. The C2H2-type 4 zinc finger occupies 270–292 (VYCPYCRITFTMRTCLLNHLKIH). The C2H2-type 5; degenerate zinc finger occupies 318 to 337 (YNCPVCDSSFRGKESLLNHL). The tract at residues 372 to 406 (SRKRRRKRISSDSSETEGPSGSDEVMEVDTDSDLS) is disordered. Positions 395–406 (EVMEVDTDSDLS) are enriched in acidic residues.

The protein belongs to the krueppel C2H2-type zinc-finger protein family. In terms of tissue distribution, expressed in oligodendrocytes and at lower levels in astrocytes.

It localises to the nucleus. Functionally, transcription regulator required to maintain maternal and paternal gene imprinting, a process by which gene expression is restricted in a parent of origin-specific manner by epigenetic modification of genomic DNA and chromatin, including DNA methylation. Acts by controlling DNA methylation during the earliest multicellular stages of development at multiple imprinting control regions (ICRs). Acts together with ZNF445. Required for the establishment of maternal methylation imprints at SNRPN locus. Acts as a transcriptional repressor in Schwann cells. Binds to a 5'-TGCCGC-3' consensus sequence and recognizes the methylated CpG within this element. This Rattus norvegicus (Rat) protein is Zinc finger protein 57 (Zfp57).